Consider the following 149-residue polypeptide: Large ribosomal subunit protein uL15 (149 aa).

Residues 1 to 12 (MSEPIKLHDLRP) are compositionally biased toward basic and acidic residues. The interval 1 to 55 (MSEPIKLHDLRPAKGANKPKTRVGRGEASKGKTAGRGTKGTKARKQVSAAFEGGQ) is disordered.

This sequence belongs to the universal ribosomal protein uL15 family. In terms of assembly, part of the 50S ribosomal subunit.

In terms of biological role, binds to the 23S rRNA. This chain is Large ribosomal subunit protein uL15, found in Corynebacterium kroppenstedtii (strain DSM 44385 / JCM 11950 / CIP 105744 / CCUG 35717).